The primary structure comprises 486 residues: Vanillin dehydrogenase (486 aa).

NAD(+) is bound by residues 210 to 211 (GP), 230 to 231 (GS), and 252 to 254 (ELG). E252 acts as the Proton acceptor in catalysis. The Nucleophile role is filled by C286. NAD(+) is bound at residue 380–382 (EVF).

This sequence belongs to the aldehyde dehydrogenase family.

It carries out the reaction vanillin + NAD(+) + H2O = vanillate + NADH + 2 H(+). Catalyzes NAD(+)-dependent oxidation of vanillin to vanillate. Also oxidizes other aromatic aldehydes including benzaldehyde, coniferyl aldehyde and cinnamaldehyde, but has a preference for vanillin. Not active with NADP(+). Involved in the degradation pathway of lignin-derived aromatic compounds of plant cell walls. Catalyzes the conversion of vanillin to vanillate due to toxicity of vanillin to the cells. This Amycolatopsis sp. (strain ATCC 39116 / 75iv2) protein is Vanillin dehydrogenase.